Consider the following 139-residue polypeptide: Metallothiol transferase FosB (139 aa).

The VOC domain maps to 4 to 119 (GINHITYSVS…DGHKLELHTG (116 aa)). Residues H7, H66, and E115 each contribute to the Mg(2+) site. The Proton donor/acceptor role is filled by E115.

The protein belongs to the fosfomycin resistance protein family. FosB subfamily. As to quaternary structure, homodimer. Mg(2+) serves as cofactor.

The protein localises to the cytoplasm. Its function is as follows. Metallothiol transferase which confers resistance to fosfomycin by catalyzing the addition of a thiol cofactor to fosfomycin. L-cysteine is probably the physiological thiol donor. The protein is Metallothiol transferase FosB of Staphylococcus epidermidis.